The primary structure comprises 331 residues: MKAILSRLFNHEELTRKEAKNLLLNITRGMYNDAQIAALLTVFQMRGIKVEELIGFREALLTTRIPIDFSAYTPIDIVGTGGDGKNTFNISTCACFIVAGAGYHVAKHGNYGATSVSGASNVIEQHGVKFTNNPDKLTRSMEECGMVYMHAQLFNPAMKSVGPVRKALQVRTIFNLLGPLVNPCLPAYQLLGVADLPQMRLYTNVFQKLGIGFAVVNNLDGYDEISLTDEFKVMTNRYETIYKPSELGFSLARQEELYGGNTPEEASKIFNNVLENKATKAQTDCVLINASFAIQAMEPAKPIEECVAIARESLESGKALNTLKKFVELNS.

5-phospho-alpha-D-ribose 1-diphosphate contacts are provided by residues glycine 79, 82 to 83, threonine 87, 89 to 92, 107 to 115, and alanine 119; these read GD, NIST, and KHGNYGATS. Glycine 79 contributes to the anthranilate binding site. Serine 91 contacts Mg(2+). Asparagine 110 is a binding site for anthranilate. Residue arginine 165 participates in anthranilate binding. Mg(2+)-binding residues include aspartate 223 and glutamate 224.

The protein belongs to the anthranilate phosphoribosyltransferase family. As to quaternary structure, homodimer. The cofactor is Mg(2+).

It catalyses the reaction N-(5-phospho-beta-D-ribosyl)anthranilate + diphosphate = 5-phospho-alpha-D-ribose 1-diphosphate + anthranilate. It functions in the pathway amino-acid biosynthesis; L-tryptophan biosynthesis; L-tryptophan from chorismate: step 2/5. Functionally, catalyzes the transfer of the phosphoribosyl group of 5-phosphorylribose-1-pyrophosphate (PRPP) to anthranilate to yield N-(5'-phosphoribosyl)-anthranilate (PRA). The sequence is that of Anthranilate phosphoribosyltransferase from Phocaeicola vulgatus (strain ATCC 8482 / DSM 1447 / JCM 5826 / CCUG 4940 / NBRC 14291 / NCTC 11154) (Bacteroides vulgatus).